An 870-amino-acid polypeptide reads, in one-letter code: NEDD4-like E3 ubiquitin-protein ligase WWP2 (870 aa).

The C2 domain occupies 1 to 117 (MASASSSRAG…KNNGGKMENT (117 aa)). Positions 150–300 (SVPNGSAVTD…QLPAAAQAPD (151 aa)) are disordered. Residues 152–171 (PNGSAVTDGSQPPSRESSGT) show a composition bias toward polar residues. The segment covering 198 to 208 (GGSARTATAAS) has biased composition (low complexity). Phosphoserine is present on S211. Polar residues-rich tracts occupy residues 222-235 (VKNSSSSGLANGTV) and 262-289 (SVSSNPNTTSLPAQSTPAEGEEASTSGT). A compositionally biased stretch (low complexity) spans 290 to 300 (QQLPAAAQAPD). 4 consecutive WW domains span residues 300–333 (DALPAGWEQRELPNGRVYYVDHNTKTTTWERPLP), 330–363 (RPLPPGWEKRTDPRGRFYYVDHNTRTTTWQRPTA), 405–437 (GPLPPGWEKRQDNGRVYYVNHNTRTTQWEDPRT), and 444–477 (PALPPGWEMKYTSEGVRYFVDHNTRTTTFKDPRP). Residues 536 to 870 (KPYDLRRRLY…IEETEGFGQE (335 aa)) form the HECT domain. The active-site Glycyl thioester intermediate is the C838.

Interacts with SCNN1A, SCNN1B, SCNN1G, WBP1, WBP2 and ATN1. Interacts with ERBB4, NDFIP1 and NDFIP2. Interacts with ARRDC4. Interacts with POU5F1, RBP1, EGR2 and SLC11A2. Interacts (via WW domains) with ARRDC1 (via PPxY motifs); ubiquitinates ARRDC1. Interacts (via WW domains) with ARRDC2 and ARRDC3. Post-translationally, autoubiquitinated. Ubiquitinated by the SCF(FBXL15) complex, leading to its degradation by the proteasome.

It is found in the nucleus. The enzyme catalyses S-ubiquitinyl-[E2 ubiquitin-conjugating enzyme]-L-cysteine + [acceptor protein]-L-lysine = [E2 ubiquitin-conjugating enzyme]-L-cysteine + N(6)-ubiquitinyl-[acceptor protein]-L-lysine.. The protein operates within protein modification; protein ubiquitination. With respect to regulation, activated by NDFIP1- and NDFIP2-binding. E3 ubiquitin-protein ligase which accepts ubiquitin from an E2 ubiquitin-conjugating enzyme in the form of a thioester and then directly transfers the ubiquitin to targeted substrates. Polyubiquitinates POU5F1 by 'Lys-63'-linked conjugation and promotes it to proteasomal degradation; regulates POU5F1 protein level during differentiation of embryonal carcinoma cells (ECCs) but not in undifferentiated ECCs and embryonic stem cells (ESCs). Ubiquitinates EGR2 and promotes it to proteasomal degradation; in T-cells the ubiquitination inhibits activation-induced cell death. Ubiquitinates SLC11A2; the ubiquitination is enhanced by presence of NDFIP1 and NDFIP2. Ubiquitinates RPB1 and promotes it to proteasomal degradation. The protein is NEDD4-like E3 ubiquitin-protein ligase WWP2 (Wwp2) of Mus musculus (Mouse).